Reading from the N-terminus, the 76-residue chain is Kappa-scoloptoxin(15)-Ssd3a (76 aa).

Positions 1–23 (MEGKIIFICFLVVLLTLPELISS) are cleaved as a signal peptide.

In terms of processing, contains 2 disulfide bonds. In terms of tissue distribution, expressed by the venom gland.

The protein localises to the secreted. Functionally, acts as a voltage-gated potassium channel inhibitor. The protein is Kappa-scoloptoxin(15)-Ssd3a of Scolopendra dehaani (Thai centipede).